The following is a 249-amino-acid chain: MTRKLVLLRHGQSQWNLDNRFTGWVDVDLTEQGRREAAAAGRLMREEGLQFDVAHTSVLKRAIHTLQGALAELEQDWLPANKSWRLNERHYGGLQGLDKAETAAKHGEEQVKVWRRSYDIPPPPMELEDPGHPIHDRRYAGLDRNALPGTESLATTLDRVLPYWHDAIAPQLKDGKTVLVTAHGNSLRALYKYLNNVSREEILELNIPTGIPLLFELNDDLTVQSFRYLGDPEAARKAAEAVANQGKAK.

Residues 9 to 16 (RHGQSQWN), 22 to 23 (TG), arginine 61, 88 to 91 (ERHY), lysine 99, 115 to 116 (RR), and 184 to 185 (GN) each bind substrate. The active-site Tele-phosphohistidine intermediate is histidine 10. Glutamate 88 serves as the catalytic Proton donor/acceptor.

Belongs to the phosphoglycerate mutase family. BPG-dependent PGAM subfamily. Homodimer.

The enzyme catalyses (2R)-2-phosphoglycerate = (2R)-3-phosphoglycerate. Its pathway is carbohydrate degradation; glycolysis; pyruvate from D-glyceraldehyde 3-phosphate: step 3/5. Functionally, catalyzes the interconversion of 2-phosphoglycerate and 3-phosphoglycerate. The chain is 2,3-bisphosphoglycerate-dependent phosphoglycerate mutase from Stenotrophomonas maltophilia (strain K279a).